Consider the following 87-residue polypeptide: Conotoxin QcMNCL-XIII0.1 (87 aa).

The signal sequence occupies residues 1–18; the sequence is MNCLQLLLVLLLISTIAA. The propeptide occupies 19-34; the sequence is LHGDGRVPQRRGRNIR.

Contains 4 disulfide bonds. In terms of tissue distribution, expressed by the venom duct.

It is found in the secreted. In terms of biological role, may interact and inhibit Cav3.1/CACNA1G calcium channels. In a ex vivo model, shows ability to block nerve signal transduction. This chain is Conotoxin QcMNCL-XIII0.1, found in Conus quercinus (Oak cone).